We begin with the raw amino-acid sequence, 157 residues long: Large ribosomal subunit protein bL34c (157 aa).

A chloroplast-targeting transit peptide spans 1–97 (MASLSTSVVA…GQRRRGLVVR (97 aa)).

This sequence belongs to the bacterial ribosomal protein bL34 family. In terms of assembly, part of the 50S ribosomal subunit.

The protein localises to the plastid. Its subcellular location is the chloroplast. This protein binds directly to 23S ribosomal RNA. This chain is Large ribosomal subunit protein bL34c (RPL34), found in Arabidopsis thaliana (Mouse-ear cress).